Reading from the N-terminus, the 86-residue chain is Antifungal protein 2 (86 aa).

An N-terminal signal peptide occupies residues 1–21 (MHLSTALFSAIALLAATQVIG). Cystine bridges form between Cys-43–Cys-57, Cys-45–Cys-74, and Cys-49–Cys-83. The segment at 44-54 (NCPNNCKHKKG) is lipid-binding. The Gamma-core signature appears at 72-83 (GKCEWQGGQLNC).

The protein localises to the secreted. Its function is as follows. Cysteine-rich antifungal protein highly effective against yeasts such as clinically relevant Candida species, including the multidrug-resistant pathogen Candida auris. Does not cause metabolic inactivity and apoptosis induction, but the fungal cell-killing activity is connected to its pore-forming ability in the cell membrane. NFAP2 has a low potential to trigger resistance in C.albicans in vitro, and the developed tolerance to NFAP2 is not associated with severe phenotypic changes compared with development of resistance to generic fluconazole. The chain is Antifungal protein 2 from Neosartorya fischeri (strain ATCC 1020 / DSM 3700 / CBS 544.65 / FGSC A1164 / JCM 1740 / NRRL 181 / WB 181) (Aspergillus fischerianus).